The sequence spans 173 residues: Large ribosomal subunit protein uL5 (173 aa).

The protein belongs to the universal ribosomal protein uL5 family. As to quaternary structure, part of the 50S ribosomal subunit; contacts the 5S rRNA and probably tRNA. Forms a bridge to the 30S subunit in the 70S ribosome.

This is one of the proteins that bind and probably mediate the attachment of the 5S RNA into the large ribosomal subunit, where it forms part of the central protuberance. In the 70S ribosome it contacts protein S13 of the 30S subunit (bridge B1b), connecting the 2 subunits; this bridge is implicated in subunit movement. May contact the P site tRNA; the 5S rRNA and some of its associated proteins might help stabilize positioning of ribosome-bound tRNAs. The polypeptide is Large ribosomal subunit protein uL5 (Nitrosopumilus maritimus (strain SCM1)).